The chain runs to 331 residues: Anthranilate phosphoribosyltransferase (331 aa).

Residues G79, 82–83 (GD), T87, 89–92 (NIST), 107–115 (KHGNYGATS), and A119 each bind 5-phospho-alpha-D-ribose 1-diphosphate. Position 79 (G79) interacts with anthranilate. S91 is a Mg(2+) binding site. Residue N110 participates in anthranilate binding. An anthranilate-binding site is contributed by R165. The Mg(2+) site is built by D223 and E224.

The protein belongs to the anthranilate phosphoribosyltransferase family. As to quaternary structure, homodimer. It depends on Mg(2+) as a cofactor.

The catalysed reaction is N-(5-phospho-beta-D-ribosyl)anthranilate + diphosphate = 5-phospho-alpha-D-ribose 1-diphosphate + anthranilate. It functions in the pathway amino-acid biosynthesis; L-tryptophan biosynthesis; L-tryptophan from chorismate: step 2/5. In terms of biological role, catalyzes the transfer of the phosphoribosyl group of 5-phosphorylribose-1-pyrophosphate (PRPP) to anthranilate to yield N-(5'-phosphoribosyl)-anthranilate (PRA). This Bacteroides fragilis (strain ATCC 25285 / DSM 2151 / CCUG 4856 / JCM 11019 / LMG 10263 / NCTC 9343 / Onslow / VPI 2553 / EN-2) protein is Anthranilate phosphoribosyltransferase.